Consider the following 346-residue polypeptide: uncharacterized protein (346 aa).

The first 27 residues, 1 to 27 (MKFNKISLSVSTALLAAGLAVSGSANA), serve as a signal peptide directing secretion.

This is an uncharacterized protein from Haemophilus influenzae (strain ATCC 51907 / DSM 11121 / KW20 / Rd).